Reading from the N-terminus, the 515-residue chain is Iridoid oxidase (515 aa).

The next 2 helical transmembrane spans lie at 8–28 and 180–200; these read SLNP…IIFV and AVQL…NLML. Cys-455 is a binding site for heme.

The protein belongs to the cytochrome P450 family. As to expression, expressed in the leaf internal phloem-associated parenchyma (IPAP) inside the mesophyll.

The protein resides in the endoplasmic reticulum membrane. The enzyme catalyses (+)-cis-trans-nepetalactol + 3 reduced [NADPH--hemoprotein reductase] + 3 O2 = 7-deoxyloganetate + 3 oxidized [NADPH--hemoprotein reductase] + 4 H2O + 4 H(+). It functions in the pathway alkaloid biosynthesis. In terms of biological role, component of the seco-iridoid and derivatives monoterpenoid indole alkaloids (MIAs, e.g. vincristine, quinine, and strychnine) biosynthesis pathway. Catalyzes the conversion of cis-trans-nepetalactol (iridodial) into 7-deoxyloganetic acid. Also converts iridotrial into 7-deoxyloganetic acid. This is Iridoid oxidase from Catharanthus roseus (Madagascar periwinkle).